A 278-amino-acid chain; its full sequence is tRNA pseudouridine synthase A (278 aa).

The active-site Nucleophile is the Asp-61. Residue Tyr-119 coordinates substrate.

This sequence belongs to the tRNA pseudouridine synthase TruA family. As to quaternary structure, homodimer.

It carries out the reaction uridine(38/39/40) in tRNA = pseudouridine(38/39/40) in tRNA. Formation of pseudouridine at positions 38, 39 and 40 in the anticodon stem and loop of transfer RNAs. The chain is tRNA pseudouridine synthase A from Oleidesulfovibrio alaskensis (strain ATCC BAA-1058 / DSM 17464 / G20) (Desulfovibrio alaskensis).